We begin with the raw amino-acid sequence, 299 residues long: Probable alpha-L-glutamate ligase (299 aa).

One can recognise an ATP-grasp domain in the interval 111–293 (LQALAAANIA…VATQMIAYLE (183 aa)). Residues K147, 184–185 (DF), D193, and 217–219 (RAN) contribute to the ATP site. Residues D254, E266, and N268 each contribute to the Mg(2+) site. The Mn(2+) site is built by D254, E266, and N268.

It belongs to the RimK family. Requires Mg(2+) as cofactor. Mn(2+) is required as a cofactor.

This chain is Probable alpha-L-glutamate ligase, found in Mannheimia succiniciproducens (strain KCTC 0769BP / MBEL55E).